The primary structure comprises 347 residues: Lipoyl synthase (347 aa).

Residues Cys-77, Cys-82, Cys-88, Cys-103, Cys-107, Cys-110, and Ser-317 each coordinate [4Fe-4S] cluster. Residues Phe-89 to Phe-306 enclose the Radical SAM core domain.

It belongs to the radical SAM superfamily. Lipoyl synthase family. The cofactor is [4Fe-4S] cluster.

The protein resides in the cytoplasm. The enzyme catalyses [[Fe-S] cluster scaffold protein carrying a second [4Fe-4S](2+) cluster] + N(6)-octanoyl-L-lysyl-[protein] + 2 oxidized [2Fe-2S]-[ferredoxin] + 2 S-adenosyl-L-methionine + 4 H(+) = [[Fe-S] cluster scaffold protein] + N(6)-[(R)-dihydrolipoyl]-L-lysyl-[protein] + 4 Fe(3+) + 2 hydrogen sulfide + 2 5'-deoxyadenosine + 2 L-methionine + 2 reduced [2Fe-2S]-[ferredoxin]. The protein operates within protein modification; protein lipoylation via endogenous pathway; protein N(6)-(lipoyl)lysine from octanoyl-[acyl-carrier-protein]: step 2/2. In terms of biological role, catalyzes the radical-mediated insertion of two sulfur atoms into the C-6 and C-8 positions of the octanoyl moiety bound to the lipoyl domains of lipoate-dependent enzymes, thereby converting the octanoylated domains into lipoylated derivatives. The polypeptide is Lipoyl synthase (Psychrobacter cryohalolentis (strain ATCC BAA-1226 / DSM 17306 / VKM B-2378 / K5)).